Reading from the N-terminus, the 688-residue chain is Polyphosphate kinase (688 aa).

Residue asparagine 45 participates in ATP binding. The Mg(2+) site is built by arginine 375 and arginine 405. A PLD phosphodiesterase domain is found at proline 430–threonine 464. Histidine 435 functions as the Phosphohistidine intermediate in the catalytic mechanism. 3 residues coordinate ATP: tyrosine 468, arginine 564, and histidine 592.

Belongs to the polyphosphate kinase 1 (PPK1) family. Mg(2+) serves as cofactor. An intermediate of this reaction is the autophosphorylated ppk in which a phosphate is covalently linked to a histidine residue through a N-P bond.

It carries out the reaction [phosphate](n) + ATP = [phosphate](n+1) + ADP. Functionally, catalyzes the reversible transfer of the terminal phosphate of ATP to form a long-chain polyphosphate (polyP). This Escherichia coli O157:H7 protein is Polyphosphate kinase.